Reading from the N-terminus, the 296-residue chain is Acetylglutamate kinase (296 aa).

Substrate-binding positions include 71-72 (GG), Arg93, and Asn186.

It belongs to the acetylglutamate kinase family. ArgB subfamily.

The protein localises to the cytoplasm. The enzyme catalyses N-acetyl-L-glutamate + ATP = N-acetyl-L-glutamyl 5-phosphate + ADP. It functions in the pathway amino-acid biosynthesis; L-arginine biosynthesis; N(2)-acetyl-L-ornithine from L-glutamate: step 2/4. Catalyzes the ATP-dependent phosphorylation of N-acetyl-L-glutamate. This is Acetylglutamate kinase from Synechococcus sp. (strain RCC307).